Here is a 553-residue protein sequence, read N- to C-terminus: Putative transport protein YidE (553 aa).

The next 5 membrane-spanning stretches (helical) occupy residues I4–V24, G28–S48, F65–S85, L95–F115, and M158–L178. RCK C-terminal domains are found at residues Q191–Q276 and D279–N361. The next 6 membrane-spanning stretches (helical) occupy residues M371–V391, G393–L413, I439–V459, L464–L484, Y493–A513, and L533–G553.

It belongs to the AAE transporter (TC 2.A.81) family. YidE subfamily.

It is found in the cell membrane. The chain is Putative transport protein YidE from Shigella flexneri serotype 5b (strain 8401).